Reading from the N-terminus, the 699-residue chain is Elongation factor G (699 aa).

One can recognise a tr-type G domain in the interval 8–283 (EHIRNIGICA…AVVYFLPSPI (276 aa)). GTP contacts are provided by residues 17–24 (AHIDAGKT), 81–85 (DTPGH), and 135–138 (NKMD).

This sequence belongs to the TRAFAC class translation factor GTPase superfamily. Classic translation factor GTPase family. EF-G/EF-2 subfamily.

It localises to the cytoplasm. Its function is as follows. Catalyzes the GTP-dependent ribosomal translocation step during translation elongation. During this step, the ribosome changes from the pre-translocational (PRE) to the post-translocational (POST) state as the newly formed A-site-bound peptidyl-tRNA and P-site-bound deacylated tRNA move to the P and E sites, respectively. Catalyzes the coordinated movement of the two tRNA molecules, the mRNA and conformational changes in the ribosome. This is Elongation factor G from Rickettsia akari (strain Hartford).